The chain runs to 423 residues: Glutamine synthetase, chloroplastic (423 aa).

The transit peptide at 1–51 (MAQAVVPAMQCRVGVKAAAGRVWSAGRTRTGRGGASPGFKVMAVSTGSTGV) directs the protein to the chloroplast. The GS beta-grasp domain maps to 70–150 (VIAEYIWVGG…VICDTYTPQG (81 aa)). The disordered stretch occupies residues 89–115 (RTISKPVEDPSELPKWNYDGSSTGQAP). One can recognise a GS catalytic domain in the interval 154–423 (PTNKRHRAAQ…LAAKKLALKV (270 aa)).

The protein belongs to the glutamine synthetase family. Homooctamer.

It is found in the plastid. The protein localises to the chloroplast. It catalyses the reaction L-glutamate + NH4(+) + ATP = L-glutamine + ADP + phosphate + H(+). The light-modulated chloroplast enzyme, encoded by a nuclear gene and expressed primarily in leaves, is responsible for the reassimilation of the ammonia generated by photorespiration. This is Glutamine synthetase, chloroplastic (GLN2) from Zea mays (Maize).